We begin with the raw amino-acid sequence, 232 residues long: Small ribosomal subunit protein uS3 (232 aa).

A KH type-2 domain is found at 39–107 (VRQFLTKELA…PAQINIAEVR (69 aa)).

It belongs to the universal ribosomal protein uS3 family. As to quaternary structure, part of the 30S ribosomal subunit. Forms a tight complex with proteins S10 and S14.

Its function is as follows. Binds the lower part of the 30S subunit head. Binds mRNA in the 70S ribosome, positioning it for translation. This is Small ribosomal subunit protein uS3 from Yersinia pestis bv. Antiqua (strain Antiqua).